The following is a 20-amino-acid chain: Truncated non-structural protein of 4.9 kDa (20 aa).

The protein belongs to the coronaviruses ns4.9 protein family.

This Sus scrofa (Pig) protein is Truncated non-structural protein of 4.9 kDa.